The following is a 375-amino-acid chain: Queuine tRNA-ribosyltransferase (375 aa).

Aspartate 89 (proton acceptor) is an active-site residue. Substrate contacts are provided by residues 89-93, aspartate 143, glutamine 187, and glycine 214; that span reads DSGGF. The segment at 245-251 is RNA binding; the sequence is GVGKPED. The active-site Nucleophile is the aspartate 264. Residues 269-273 form an RNA binding; important for wobble base 34 recognition region; it reads TRNAR. 4 residues coordinate Zn(2+): cysteine 302, cysteine 304, cysteine 307, and histidine 333.

Belongs to the queuine tRNA-ribosyltransferase family. In terms of assembly, homodimer. Within each dimer, one monomer is responsible for RNA recognition and catalysis, while the other monomer binds to the replacement base PreQ1. Zn(2+) serves as cofactor.

The enzyme catalyses 7-aminomethyl-7-carbaguanine + guanosine(34) in tRNA = 7-aminomethyl-7-carbaguanosine(34) in tRNA + guanine. Its pathway is tRNA modification; tRNA-queuosine biosynthesis. Functionally, catalyzes the base-exchange of a guanine (G) residue with the queuine precursor 7-aminomethyl-7-deazaguanine (PreQ1) at position 34 (anticodon wobble position) in tRNAs with GU(N) anticodons (tRNA-Asp, -Asn, -His and -Tyr). Catalysis occurs through a double-displacement mechanism. The nucleophile active site attacks the C1' of nucleotide 34 to detach the guanine base from the RNA, forming a covalent enzyme-RNA intermediate. The proton acceptor active site deprotonates the incoming PreQ1, allowing a nucleophilic attack on the C1' of the ribose to form the product. After dissociation, two additional enzymatic reactions on the tRNA convert PreQ1 to queuine (Q), resulting in the hypermodified nucleoside queuosine (7-(((4,5-cis-dihydroxy-2-cyclopenten-1-yl)amino)methyl)-7-deazaguanosine). The sequence is that of Queuine tRNA-ribosyltransferase from Salmonella choleraesuis (strain SC-B67).